The primary structure comprises 1520 residues: Myosin-5 (1520 aa).

The region spanning 7-56 (IVGSHVWVEDPHLAWIDGEVTRIDGINVHVKTKKGKTVVTNVYFPKDTEA) is the Myosin N-terminal SH3-like domain. The Myosin motor domain occupies 59 to 729 (GGVDDMTKLS…QMAELDARRA (671 aa)). Residues 153–160 (GESGAGKT) and 206–214 (NNNSSRFGK) each bind ATP. Actin-binding regions lie at residues 492–526 (LIEK…FQTF), 528–551 (EHER…AGEV), 586–610 (FHAL…KQQL), and 610–632 (LHSL…KPNN). IQ domains lie at 732 to 761 (LGNA…AAIV), 755 to 784 (IRNA…EAAA), 780 to 809 (IEAA…STIV), 803 to 832 (TRSS…RKAA), 828 to 857 (QRKA…AAIV), and 851 to 880 (LQKA…AARD). Residues 881 to 1047 (TGALKDAKNK…ESENKVLRQQ (167 aa)) adopt a coiled-coil conformation. The tract at residues 1062–1100 (PKTTIIQRTPEKDTFSNGETTQLQEPETEDRPQKSLNQK) is disordered. A compositionally biased stretch (polar residues) spans 1076 to 1086 (FSNGETTQLQE). Residues 1148–1463 (NRIIETIASA…IATMRAEVSD (316 aa)) enclose the Dilute domain.

It belongs to the TRAFAC class myosin-kinesin ATPase superfamily. Myosin family. Plant myosin class XI subfamily. In terms of assembly, homodimer. Interacts with MYOB1 and MYOB2. Interacts with PHOX1.

The protein localises to the cytoplasm. Its function is as follows. Myosin heavy chain that is required for the cell cycle-regulated transport of various organelles and proteins for their segregation. Functions by binding with its tail domain to receptor proteins on organelles and exerting force with its N-terminal motor domain against actin filaments, thereby transporting its cargo along polarized actin cables. Contributes to the trafficking of Golgi stacks, mitochondria and peroxisomes. Required for development of pavement cells, trichomes, and stigmatic papillae. The sequence is that of Myosin-5 (XI-1) from Arabidopsis thaliana (Mouse-ear cress).